The primary structure comprises 236 residues: Uridylate kinase (236 aa).

11-14 (KFSG) is a binding site for ATP. G53 serves as a coordination point for UMP. ATP-binding residues include G54 and R58. Residues D73 and 134–141 (TGSPFFTT) contribute to the UMP site. T161, Y167, and D170 together coordinate ATP.

It belongs to the UMP kinase family. As to quaternary structure, homohexamer.

The protein localises to the cytoplasm. It catalyses the reaction UMP + ATP = UDP + ADP. Its pathway is pyrimidine metabolism; CTP biosynthesis via de novo pathway; UDP from UMP (UMPK route): step 1/1. With respect to regulation, inhibited by UTP. In terms of biological role, catalyzes the reversible phosphorylation of UMP to UDP. In Hydrogenovibrio crunogenus (strain DSM 25203 / XCL-2) (Thiomicrospira crunogena), this protein is Uridylate kinase.